Consider the following 239-residue polypeptide: Small ribosomal subunit protein uS3 (239 aa).

In terms of domain architecture, KH type-2 spans 39-107; the sequence is VRQVLRKKMS…SVHINVIEVR (69 aa). The tract at residues 214–239 is disordered; it reads GQEKQDDGSRGDRNADRSSRRSREVR. The segment covering 216 to 239 has biased composition (basic and acidic residues); the sequence is EKQDDGSRGDRNADRSSRRSREVR.

This sequence belongs to the universal ribosomal protein uS3 family. Part of the 30S ribosomal subunit. Forms a tight complex with proteins S10 and S14.

In terms of biological role, binds the lower part of the 30S subunit head. Binds mRNA in the 70S ribosome, positioning it for translation. The polypeptide is Small ribosomal subunit protein uS3 (Xylella fastidiosa (strain M12)).